The sequence spans 94 residues: Large ribosomal subunit protein bL27 (94 aa).

Positions 1 to 9 are excised as a propeptide; it reads MLRLDLQFF.

The protein belongs to the bacterial ribosomal protein bL27 family. In terms of processing, the N-terminus is cleaved by ribosomal processing cysteine protease Prp.

The chain is Large ribosomal subunit protein bL27 from Bacillus velezensis (strain DSM 23117 / BGSC 10A6 / LMG 26770 / FZB42) (Bacillus amyloliquefaciens subsp. plantarum).